The chain runs to 142 residues: Large ribosomal subunit protein uL13 (142 aa).

Belongs to the universal ribosomal protein uL13 family. As to quaternary structure, part of the 50S ribosomal subunit.

Functionally, this protein is one of the early assembly proteins of the 50S ribosomal subunit, although it is not seen to bind rRNA by itself. It is important during the early stages of 50S assembly. This chain is Large ribosomal subunit protein uL13, found in Erwinia tasmaniensis (strain DSM 17950 / CFBP 7177 / CIP 109463 / NCPPB 4357 / Et1/99).